The following is a 422-amino-acid chain: L-threonine dehydratase biosynthetic IlvA (422 aa).

At Lys-56 the chain carries N6-(pyridoxal phosphate)lysine. Residues Asn-83, Gly-189–Leu-193, and Ser-315 each bind pyridoxal 5'-phosphate. Residues His-339 to Glu-413 enclose the ACT-like domain.

It belongs to the serine/threonine dehydratase family. In terms of assembly, homotetramer. Pyridoxal 5'-phosphate serves as cofactor.

It catalyses the reaction L-threonine = 2-oxobutanoate + NH4(+). The protein operates within amino-acid biosynthesis; L-isoleucine biosynthesis; 2-oxobutanoate from L-threonine: step 1/1. Its function is as follows. Catalyzes the anaerobic formation of alpha-ketobutyrate and ammonia from threonine in a two-step reaction. The first step involved a dehydration of threonine and a production of enamine intermediates (aminocrotonate), which tautomerizes to its imine form (iminobutyrate). Both intermediates are unstable and short-lived. The second step is the nonenzymatic hydrolysis of the enamine/imine intermediates to form 2-ketobutyrate and free ammonia. In the low water environment of the cell, the second step is accelerated by RidA. The protein is L-threonine dehydratase biosynthetic IlvA (ilvA) of Staphylococcus epidermidis (strain ATCC 12228 / FDA PCI 1200).